The primary structure comprises 262 residues: Type III pantothenate kinase (262 aa).

9–16 serves as a coordination point for ATP; the sequence is DIGNTNIV. Residues Tyr103 and 110–113 each bind substrate; that span reads GVDR. Asp112 (proton acceptor) is an active-site residue. Asp132 lines the K(+) pocket. Thr135 contacts ATP. Thr187 provides a ligand contact to substrate.

The protein belongs to the type III pantothenate kinase family. As to quaternary structure, homodimer. Requires NH4(+) as cofactor. K(+) serves as cofactor.

It localises to the cytoplasm. The catalysed reaction is (R)-pantothenate + ATP = (R)-4'-phosphopantothenate + ADP + H(+). It participates in cofactor biosynthesis; coenzyme A biosynthesis; CoA from (R)-pantothenate: step 1/5. In terms of biological role, catalyzes the phosphorylation of pantothenate (Pan), the first step in CoA biosynthesis. This chain is Type III pantothenate kinase, found in Finegoldia magna (strain ATCC 29328 / DSM 20472 / WAL 2508) (Peptostreptococcus magnus).